The sequence spans 347 residues: Homoisocitrate dehydrogenase (347 aa).

68 to 70 (ITS) contacts NADH. Ser70 contributes to the (2R,3S)-homoisocitrate binding site. Ser81 is subject to Phosphoserine. 6 residues coordinate (2R,3S)-homoisocitrate: Arg87, Arg97, Arg128, Tyr135, Lys181, and Asn183. Asn183 lines the NADH pocket. The Mg(2+) site is built by Asp213, Asp237, and Asp241. Residues 270–274 (GSAPD) and Asn282 contribute to the NADH site.

The protein belongs to the isocitrate and isopropylmalate dehydrogenases family. Requires Mg(2+) as cofactor.

The catalysed reaction is (2R,3S)-homoisocitrate + NAD(+) = 2-oxoadipate + CO2 + NADH. The enzyme catalyses (2R,3S)-iso(homo)2citrate + NAD(+) = 2-oxoheptanedioate + CO2 + NADH. It carries out the reaction (2R,3S)-iso(homo)3citrate + NAD(+) = 2-oxosuberate + CO2 + NADH. Its pathway is organic acid metabolism; 2-oxosuberate biosynthesis. In terms of biological role, catalyzes the NAD-dependent oxidation and decarboxylation of (2R,3S)-homoisocitrate, (2R,3S)-homo(2)-isocitrate and (2R,3S)-homo(3)-isocitrate, into 2-oxoadipate, 2-oxopimelate (2-oxoheptanedioate), and 2-oxosuberate, respectively. All these substrates are intermediates in the biosynthesis of biotin and of 7-mercaptoheptanoate, a moiety of coenzyme B in methanoarchaea. Is also able to produce 2-oxoazelate from (2R,3S)-homo(4)-isocitrate in vitro, but this substrate is probably not physiologically relevant. Is unable to use any isomer of isocitrate or isopropylmalate as a substrate, and NADP as an oxidant. The polypeptide is Homoisocitrate dehydrogenase (aksF) (Methanocaldococcus jannaschii (strain ATCC 43067 / DSM 2661 / JAL-1 / JCM 10045 / NBRC 100440) (Methanococcus jannaschii)).